A 164-amino-acid polypeptide reads, in one-letter code: OV-17 antigen (164 aa).

Positions 1–16 are cleaved as a signal peptide; the sequence is MKFVILLTIGLLVVAA. The segment at 24 to 43 is disordered; sequence QQQQQQQQQRDEREIPPFLE.

Belongs to the SXP/RAL-2 family. High levels in the hypodermal layer of the adult female.

This Onchocerca volvulus protein is OV-17 antigen (OV17).